Here is an 852-residue protein sequence, read N- to C-terminus: Leucine--tRNA ligase (852 aa).

A 'HIGH' region motif is present at residues 41–51; it reads PYPSGRIHIGH. The 'KMSKS' region signature appears at 623 to 627; that stretch reads KMSKS. Lys-626 is an ATP binding site.

This sequence belongs to the class-I aminoacyl-tRNA synthetase family.

The protein resides in the cytoplasm. It carries out the reaction tRNA(Leu) + L-leucine + ATP = L-leucyl-tRNA(Leu) + AMP + diphosphate. This is Leucine--tRNA ligase from Ruegeria pomeroyi (strain ATCC 700808 / DSM 15171 / DSS-3) (Silicibacter pomeroyi).